A 352-amino-acid polypeptide reads, in one-letter code: Quinolinate synthase (352 aa).

2 residues coordinate iminosuccinate: H48 and S69. C114 is a [4Fe-4S] cluster binding site. Residues 140-142 and S157 each bind iminosuccinate; that span reads YAN. C201 serves as a coordination point for [4Fe-4S] cluster. Iminosuccinate is bound by residues 227–229 and T244; that span reads HPE. C298 serves as a coordination point for [4Fe-4S] cluster.

The protein belongs to the quinolinate synthase family. Type 1 subfamily. [4Fe-4S] cluster is required as a cofactor.

It localises to the cytoplasm. It catalyses the reaction iminosuccinate + dihydroxyacetone phosphate = quinolinate + phosphate + 2 H2O + H(+). It functions in the pathway cofactor biosynthesis; NAD(+) biosynthesis; quinolinate from iminoaspartate: step 1/1. In terms of biological role, catalyzes the condensation of iminoaspartate with dihydroxyacetone phosphate to form quinolinate. This Pseudomonas putida (strain GB-1) protein is Quinolinate synthase.